The sequence spans 363 residues: Flagellar P-ring protein (363 aa).

The signal sequence occupies residues 1 to 20 (MKIKLILACALMVFSAASSA).

It belongs to the FlgI family. In terms of assembly, the basal body constitutes a major portion of the flagellar organelle and consists of four rings (L,P,S, and M) mounted on a central rod.

The protein localises to the periplasm. It is found in the bacterial flagellum basal body. Its function is as follows. Assembles around the rod to form the L-ring and probably protects the motor/basal body from shearing forces during rotation. This Shewanella loihica (strain ATCC BAA-1088 / PV-4) protein is Flagellar P-ring protein.